The primary structure comprises 221 residues: ATP phosphoribosyltransferase (221 aa).

Belongs to the ATP phosphoribosyltransferase family. Short subfamily. As to quaternary structure, heteromultimer composed of HisG and HisZ subunits.

Its subcellular location is the cytoplasm. It catalyses the reaction 1-(5-phospho-beta-D-ribosyl)-ATP + diphosphate = 5-phospho-alpha-D-ribose 1-diphosphate + ATP. The protein operates within amino-acid biosynthesis; L-histidine biosynthesis; L-histidine from 5-phospho-alpha-D-ribose 1-diphosphate: step 1/9. Functionally, catalyzes the condensation of ATP and 5-phosphoribose 1-diphosphate to form N'-(5'-phosphoribosyl)-ATP (PR-ATP). Has a crucial role in the pathway because the rate of histidine biosynthesis seems to be controlled primarily by regulation of HisG enzymatic activity. The sequence is that of ATP phosphoribosyltransferase from Symbiobacterium thermophilum (strain DSM 24528 / JCM 14929 / IAM 14863 / T).